Reading from the N-terminus, the 471-residue chain is Variant surface glycoprotein ILTAT 1.21 (471 aa).

The signal sequence occupies residues 1–21; the sequence is MLRALLPSTTLALILAGGGHA. Asn-64 and Asn-405 each carry an N-linked (GlcNAc...) asparagine glycan. Positions 406–449 are disordered; that stretch reads ATADECPETRCEYDSEKNECRPKKGTETTATGPGERTTPADGKA. A compositionally biased stretch (basic and acidic residues) spans 412–431; sequence PETRCEYDSEKNECRPKKGT. Asn-450 carries N-linked (GlcNAc...) asparagine glycosylation. Ser-454 is lipidated: GPI-anchor amidated serine. A propeptide spans 455 to 471 (removed in mature form); the sequence is DSLLIKTSPLWLAFLLF.

The protein resides in the cell membrane. VSG forms a coat on the surface of the parasite. The trypanosome evades the immune response of the host by expressing a series of antigenically distinct VSGs from an estimated 1000 VSG genes. The sequence is that of Variant surface glycoprotein ILTAT 1.21 from Trypanosoma brucei brucei.